A 112-amino-acid chain; its full sequence is Integration host factor subunit alpha (112 aa).

This sequence belongs to the bacterial histone-like protein family. As to quaternary structure, heterodimer of an alpha and a beta chain.

Its function is as follows. This protein is one of the two subunits of integration host factor, a specific DNA-binding protein that functions in genetic recombination as well as in transcriptional and translational control. This chain is Integration host factor subunit alpha, found in Rhizobium etli (strain CIAT 652).